The sequence spans 392 residues: Phosphoglycerate kinase (392 aa).

Substrate is bound by residues 21-23 (DFN), arginine 36, 59-62 (HLGR), arginine 118, and arginine 151. ATP contacts are provided by residues lysine 201, glycine 292, glutamate 323, and 349–352 (GGDS).

The protein belongs to the phosphoglycerate kinase family. As to quaternary structure, monomer.

Its subcellular location is the cytoplasm. The enzyme catalyses (2R)-3-phosphoglycerate + ATP = (2R)-3-phospho-glyceroyl phosphate + ADP. Its pathway is carbohydrate degradation; glycolysis; pyruvate from D-glyceraldehyde 3-phosphate: step 2/5. The chain is Phosphoglycerate kinase from Borrelia duttonii (strain Ly).